Consider the following 163-residue polypeptide: Ubiquitin-like protein 1-ribosomal protein eS31 fusion protein (163 aa).

One can recognise a Ubiquitin-like domain in the interval 1–70; that stretch reads MVFVKTLNRT…IYVNLELLGG (70 aa). Residue G70 forms a Glycyl lysine isopeptide (Gly-Lys) (interchain with K-? in acceptor proteins) linkage. The segment at 115–138 adopts a C4-type zinc-finger fold; it reads CQQPSCGGGVFMAQHANRHYCGRC.

This sequence in the N-terminal section; belongs to the ubiquitin family. The protein in the C-terminal section; belongs to the eukaryotic ribosomal protein eS31 family.

In Caenorhabditis briggsae, this protein is Ubiquitin-like protein 1-ribosomal protein eS31 fusion protein (ubl-1).